The following is a 106-amino-acid chain: uncharacterized protein (106 aa).

The 93-residue stretch at 1–93 folds into the HTH hxlR-type domain; that stretch reads MSIFYVLGKK…WEAKWKEAKI (93 aa).

This is an uncharacterized protein from Methanocaldococcus jannaschii (strain ATCC 43067 / DSM 2661 / JAL-1 / JCM 10045 / NBRC 100440) (Methanococcus jannaschii).